A 243-amino-acid polypeptide reads, in one-letter code: Voltage-gated monoatomic cation channel TMEM109 (243 aa).

The signal sequence occupies residues 1-33 (MAGAHSTPLWSRHLLKAVLMVLVALFLVHSASA). Over 34–83 (QSHREFASPGQQKKETSADILTQIGRSLKEMLDTWLGPETMHVISETLLQ) the chain is Lumenal. The chain crosses the membrane as a helical span at residues 84–104 (VMWAISSAISVACFALSGIAA). Topologically, residues 105–135 (QLLSALGLDGEQLTQGLKLSPSQVQTLLLWG) are cytoplasmic. A helical membrane pass occupies residues 136–156 (AAALVIYWLLSLLLGLVLALL). Over 157 to 185 (GRILGGLKLVLFVAGFVALVRSVPDPSTR) the chain is Lumenal. A helical membrane pass occupies residues 186 to 205 (ALMLLALLTLFALLSRLTGS). The Cytoplasmic portion of the chain corresponds to 206–243 (RSSGSHLEAKVRGLERQIEELRGRQRRAAKMPRSMEEE).

Homooligomer. Interacts with CRYAB; in the cellular response to DNA damage.

Its subcellular location is the nucleus outer membrane. The protein localises to the endoplasmic reticulum membrane. It localises to the sarcoplasmic reticulum membrane. It carries out the reaction K(+)(in) = K(+)(out). The enzyme catalyses Ca(2+)(in) = Ca(2+)(out). Its function is as follows. Functions as a voltage-gated monoatomic cation channel permeable to both potassium and calcium. Plays a role in the cellular response to DNA damage. This is Voltage-gated monoatomic cation channel TMEM109 from Mus musculus (Mouse).